We begin with the raw amino-acid sequence, 842 residues long: Translation initiation factor IF-2 (842 aa).

The segment at 121–144 is disordered; sequence TESTSVEKSESDDVTLEEESSKKV. One can recognise a tr-type G domain in the interval 340 to 510; sequence PRAPVVTVMG…LLMAELLELK (171 aa). Residues 349 to 356 form a G1 region; the sequence is GHVDHGKT. Position 349–356 (349–356) interacts with GTP; the sequence is GHVDHGKT. Residues 374–378 form a G2 region; the sequence is GITQH. Residues 396–399 are G3; it reads DTPG. Residues 396 to 400 and 450 to 453 contribute to the GTP site; these read DTPGH and NKID. Residues 450 to 453 are G4; that stretch reads NKID. The tract at residues 486–488 is G5; the sequence is SAK.

The protein belongs to the TRAFAC class translation factor GTPase superfamily. Classic translation factor GTPase family. IF-2 subfamily.

The protein localises to the cytoplasm. One of the essential components for the initiation of protein synthesis. Protects formylmethionyl-tRNA from spontaneous hydrolysis and promotes its binding to the 30S ribosomal subunits. Also involved in the hydrolysis of GTP during the formation of the 70S ribosomal complex. This chain is Translation initiation factor IF-2, found in Ehrlichia chaffeensis (strain ATCC CRL-10679 / Arkansas).